The primary structure comprises 412 residues: Histidine--tRNA ligase (412 aa).

It belongs to the class-II aminoacyl-tRNA synthetase family. Homodimer.

It localises to the cytoplasm. The enzyme catalyses tRNA(His) + L-histidine + ATP = L-histidyl-tRNA(His) + AMP + diphosphate + H(+). This is Histidine--tRNA ligase from Rickettsia typhi (strain ATCC VR-144 / Wilmington).